Here is a 197-residue protein sequence, read N- to C-terminus: MACVTFREPISATVGKRMVFTGPAYVKDHLPQVAQHTAYIGEKRPALEKTGDLRYLWRPASNRSLPAKYKPEYVGEIGWGIPEYDFINKTRLQTGFHIKYEEFSQAAIDKLSHRYQSPWQPNPSIMDAEGSSSRGFIAWHMGDYEDTSQRNSKRAVLLRQSKAALPIGSRPPKLPKLPKKEEKSKFRPLHQHDARCY.

Positions 161-197 (SKAALPIGSRPPKLPKLPKKEEKSKFRPLHQHDARCY) are disordered. The segment covering 178-197 (PKKEEKSKFRPLHQHDARCY) has biased composition (basic and acidic residues).

This Bos taurus (Bovine) protein is Protein SPMIP2 (SPMIP2).